The sequence spans 377 residues: tRNA-specific 2-thiouridylase MnmA (377 aa).

ATP contacts are provided by residues 17–24 and Met43; that span reads GMSGGVDS. Positions 103–105 are interaction with target base in tRNA; the sequence is NPD. Cys108 serves as the catalytic Nucleophile. Cys108 and Cys204 are joined by a disulfide. Gly132 contacts ATP. Positions 154 to 156 are interaction with tRNA; that stretch reads KDQ. The active-site Cysteine persulfide intermediate is the Cys204. An interaction with tRNA region spans residues 316–317; that stretch reads RY.

The protein belongs to the MnmA/TRMU family.

Its subcellular location is the cytoplasm. The catalysed reaction is S-sulfanyl-L-cysteinyl-[protein] + uridine(34) in tRNA + AH2 + ATP = 2-thiouridine(34) in tRNA + L-cysteinyl-[protein] + A + AMP + diphosphate + H(+). In terms of biological role, catalyzes the 2-thiolation of uridine at the wobble position (U34) of tRNA, leading to the formation of s(2)U34. The polypeptide is tRNA-specific 2-thiouridylase MnmA (Pseudomonas fluorescens (strain ATCC BAA-477 / NRRL B-23932 / Pf-5)).